The chain runs to 280 residues: P32 adhesin (280 aa).

The next 2 helical transmembrane spans lie at 13–37 and 68–92; these read FIVL…ALVV and WFIP…AIGL. A compositionally biased stretch (polar residues) spans 114-128; the sequence is EQLQRISDQQEQQTV. Disordered regions lie at residues 114–149 and 163–280; these read EQLQ…QPLQ and FNPN…GLKP. Composition is skewed to low complexity over residues 132-149 and 168-188; these read PQQS…QPLQ and QQRP…NFNP. Repeat copies occupy residues 163 to 168, 170 to 174, 186 to 190, 191 to 195, 196 to 200, 199 to 204, 206 to 210, 222 to 226, 227 to 231, 232 to 236, 249 to 254, 256 to 260, and 259 to 264. Residues 163–264 form a 6 X 5 AA repeats of [FM]-N-P-N-M-Q region; sequence FNPNMQQRPG…QRPGFNPNMQ (102 aa). The 5 X 5 AA repeats of R-P-G-F-N stretch occupies residues 170–260; it reads RPGFNQPNQQ…PNMQQRPGFN (91 aa). The 2 X 5 AA repeats of F-N-P-R-M stretch occupies residues 186 to 226; sequence FNPRMNPNMQRPGFNPNMQQRPGFNQPNQQFQPHNNFNPRM. The span at 204–224 shows a compositional bias: low complexity; the sequence is QQRPGFNQPNQQFQPHNNFNP. Low complexity predominate over residues 235–257; sequence FNQPHPNQFAQPNNFNPNMQQRP. Residues 261–271 are compositionally biased toward polar residues; that stretch reads PNMQQRPNPSQ.

It localises to the cell projection. The protein resides in the attachment organelle membrane. Adhesin necessary for successful cytadherence and virulence. In Mycoplasma genitalium (strain ATCC 33530 / DSM 19775 / NCTC 10195 / G37) (Mycoplasmoides genitalium), this protein is P32 adhesin.